Here is a 359-residue protein sequence, read N- to C-terminus: 3-dehydroquinate synthase (359 aa).

Residues Asp71 to Lys76, Gly105 to Asp109, Thr129 to Thr130, Lys142, Lys151, and Cys169 to Thr172 each bind NAD(+). Residues Glu184, His247, and His264 each contribute to the Zn(2+) site.

The protein belongs to the sugar phosphate cyclases superfamily. Dehydroquinate synthase family. Co(2+) serves as cofactor. The cofactor is Zn(2+). Requires NAD(+) as cofactor.

The protein resides in the cytoplasm. The catalysed reaction is 7-phospho-2-dehydro-3-deoxy-D-arabino-heptonate = 3-dehydroquinate + phosphate. The protein operates within metabolic intermediate biosynthesis; chorismate biosynthesis; chorismate from D-erythrose 4-phosphate and phosphoenolpyruvate: step 2/7. In terms of biological role, catalyzes the conversion of 3-deoxy-D-arabino-heptulosonate 7-phosphate (DAHP) to dehydroquinate (DHQ). The protein is 3-dehydroquinate synthase of Shewanella pealeana (strain ATCC 700345 / ANG-SQ1).